The primary structure comprises 351 residues: D-glucoside 3-dehydrogenase (351 aa).

This sequence belongs to the Gfo/Idh/MocA family.

The enzyme catalyses a D-glucoside + NAD(+) = a 3-dehydro-D-glucoside + NADH + H(+). Catalyzes the NADH-dependent reduction of the oxo group at C3 of 3-dehydro-D-glucosides leading to D-glucosides. Probably functions in a metabolic pathway that transforms D-gulosides to D-glucosides. Can use 3-dehydro-D-glucose, methyl alpha-3-dehydro-D-glucoside and methyl beta-3-dehydro-D-glucoside as substrates in vitro. However, the actual specific physiological substrates for this metabolic pathway are unknown. To a lesser extent, is also able to catalyze the reverse reactions, i.e. the NAD(+)-dependent oxidation of the hydroxyl group at C3 of D-glucosides leading to 3-dehydro-D-glucosides. Cannot act on UDP-glucose, UDP-N-acetyl-D-glucosamine, D-glucosamine, N-acetyl-D-glucosamine, or UDP-D-galactose. This is D-glucoside 3-dehydrogenase (ycjS) from Escherichia coli (strain K12).